The chain runs to 606 residues: Polyphenol oxidase A1, chloroplastic (606 aa).

A chloroplast-targeting transit peptide spans 1 to 92 (MTSISALSFI…TLATNPSALA (92 aa)). The disordered stretch occupies residues 32-63 (KQHQSSKLRKPKRQVTCSSNNNQNNPKEEQEL). A compositionally biased stretch (basic residues) spans 35–44 (QSSKLRKPKR). Intrachain disulfides connect Cys-103/Cys-121 and Cys-120/Cys-182. Cu cation contacts are provided by His-181, His-202, His-211, His-333, His-337, and His-367. The segment at residues 185–202 (CDGAYSQIGFPDLKLQVH) is a cross-link (2'-(S-cysteinyl)-histidine (Cys-His)).

The protein belongs to the tyrosinase family. The cofactor is Cu(2+).

The protein localises to the plastid. It is found in the chloroplast thylakoid lumen. The enzyme catalyses 2 catechol + O2 = 2 1,2-benzoquinone + 2 H2O. Its function is as follows. Catalyzes the oxidation of mono- and o-diphenols to o-diquinones. The sequence is that of Polyphenol oxidase A1, chloroplastic from Vicia faba (Broad bean).